Here is a 166-residue protein sequence, read N- to C-terminus: Probable calcium-binding protein CML17 (166 aa).

EF-hand domains follow at residues Glu-12–Lys-47, Pro-48–Ser-83, Tyr-91–Ala-126, and Leu-127–Asp-162. The Ca(2+) site is built by Asp-25, Asn-27, Asp-29, Ser-31, and Glu-36. Ca(2+)-binding residues include Asp-104, Asp-106, Asn-108, Glu-115, Asp-140, Asp-142, Asp-144, Arg-146, and Glu-151.

Potential calcium sensor. The chain is Probable calcium-binding protein CML17 (CML17) from Arabidopsis thaliana (Mouse-ear cress).